The chain runs to 242 residues: Type III pantothenate kinase (242 aa).

Aspartate 7 to lysine 14 contributes to the ATP binding site. Substrate contacts are provided by residues tyrosine 91 and glycine 98–arginine 101. Aspartate 100 serves as the catalytic Proton acceptor. Residue threonine 121 coordinates ATP. Threonine 171 is a binding site for substrate.

Belongs to the type III pantothenate kinase family. As to quaternary structure, homodimer. NH4(+) is required as a cofactor. The cofactor is K(+).

It localises to the cytoplasm. It carries out the reaction (R)-pantothenate + ATP = (R)-4'-phosphopantothenate + ADP + H(+). It participates in cofactor biosynthesis; coenzyme A biosynthesis; CoA from (R)-pantothenate: step 1/5. Catalyzes the phosphorylation of pantothenate (Pan), the first step in CoA biosynthesis. The chain is Type III pantothenate kinase from Xanthomonas oryzae pv. oryzae (strain MAFF 311018).